A 283-amino-acid polypeptide reads, in one-letter code: Bifunctional protein FolD (283 aa).

Residues 164 to 166 (GRS), Ser189, and Ile230 each bind NADP(+).

Belongs to the tetrahydrofolate dehydrogenase/cyclohydrolase family. In terms of assembly, homodimer.

The enzyme catalyses (6R)-5,10-methylene-5,6,7,8-tetrahydrofolate + NADP(+) = (6R)-5,10-methenyltetrahydrofolate + NADPH. It catalyses the reaction (6R)-5,10-methenyltetrahydrofolate + H2O = (6R)-10-formyltetrahydrofolate + H(+). Its pathway is one-carbon metabolism; tetrahydrofolate interconversion. In terms of biological role, catalyzes the oxidation of 5,10-methylenetetrahydrofolate to 5,10-methenyltetrahydrofolate and then the hydrolysis of 5,10-methenyltetrahydrofolate to 10-formyltetrahydrofolate. The protein is Bifunctional protein FolD of Lacticaseibacillus casei (strain BL23) (Lactobacillus casei).